Consider the following 1207-residue polypeptide: MIDVNNFHYMKIGLASPEKIRSWSFGEVKKPETINYRTLKPEKDGLFCERIFGPTKDWECSCGKYKRVRYKGMVCDRCGVEVTKSKVRRERMGHIELAAPVSHIWYFKGIPSRMGLLLDMSPRALEEVIYFASYVVVDPGPTGLEKKTLLSEAEFRDYYDKYPGQFVAKMGAEGIKDLLEEIDLDEELKLLRDELESATGQRLTRAIKRLEVVESFRNSGNKPSWMILDVLPIIPPEIRPMVQLDGGRFATSDLNDLYRRVINRNNRLKRLLDLGAPGIIVQNEKRMLQEAVDALIDNGRRGRPVTGPGNRPLKSLSHMLKGKQGRFRQNLLGKRVDYSGRSVIAVGPSLKMYQCGLPKEMALELFKPFVMKELVQREIATNIKNAKSKIERMDDEVWDVLEEVIREHPVLLNRAPTLHRLGIQAFEPTLVEGRAIRLHPLVTTAYNADFDGDQMAVHVPLSKEAQAEARMLMLAAQNILNPKDGKPVVTPSQDMVLGNYYLTLERKDAVNTGAIFNNTNEVLKAYANGFVHLHTRIGVHASSFNNPTFTEEQNKKILATSVGKIIFNEIIPDSFAYINEPTQENLERKTPNRYFIDPTTLGEGGLKEYFENEELIEPFNKKFLGNIIAEVFNRFSITDTSMMLDRMKDLGFKFSSKAGITVGVADIVVLPDKQQILDEHEKLVDRITKQFNRGLITEEERYNAVVEIWTDAKDQIQGELMQSLDKTNPIFMMSDSGARGNASNFTQLAGMRGLMAAPSGKIIELPITSSFREGLTVLEYFISTHGARKGLADTALKTADSGYLTRRLVDVAQDVIVREEDCGTDRGLLVSDIKEGTEMIEPFIERIEGRYSKETIRHPETDEIIIRPDELITPEIAKKITDAGIEQMYIRSAFTCNARHGVCEKCYGKNLATGEKVEVGEAVGTIAAQSIGEPGTQLTMRTFHTGGVAGSDITQGLPRIQEIFEARNPKGQAVITEIEGVVEDIKLAKDRQQEIVVKGANETRSYLASGTSRIIVEIGQPVQRGEVLTEGSIEPKNYLSVAGLNATESYLLKEVQKVYRMQGVEIDDKHVEVMVRQMLRKVRIIEAGDTKLLPGSLVDIHNFTDANREAFKHRKRPATAKPVLLGITKASLETESFLSAASFQETTRVLTDAAIKGKRDDLLGLKENVIIGKLIPAGTGMRRYSDVKYEKTAKPVAEVESQTEVTE.

4 residues coordinate Zn(2+): Cys60, Cys62, Cys75, and Cys78. The Mg(2+) site is built by Asp449, Asp451, and Asp453. The Zn(2+) site is built by Cys822, Cys896, Cys903, and Cys906.

It belongs to the RNA polymerase beta' chain family. The RNAP catalytic core consists of 2 alpha, 1 beta, 1 beta' and 1 omega subunit. When a sigma factor is associated with the core the holoenzyme is formed, which can initiate transcription. Requires Mg(2+) as cofactor. Zn(2+) is required as a cofactor.

The catalysed reaction is RNA(n) + a ribonucleoside 5'-triphosphate = RNA(n+1) + diphosphate. Its function is as follows. DNA-dependent RNA polymerase catalyzes the transcription of DNA into RNA using the four ribonucleoside triphosphates as substrates. The polypeptide is DNA-directed RNA polymerase subunit beta' (Staphylococcus aureus (strain NCTC 8325 / PS 47)).